The chain runs to 810 residues: Protein 4.1 (810 aa).

Positions 1–124 are disordered; that stretch reads MTTEKSLVAE…KEIEFGTSLD (124 aa). Residue Ser14 is modified to Phosphoserine. The residue at position 61 (Thr61) is a Phosphothreonine. Basic and acidic residues predominate over residues 62–76; the sequence is PTHEDLTKNKERTSE. Phosphoserine occurs at positions 85, 86, 96, 105, 122, 150, 152, 153, 189, and 192. Residues 102-118 are compositionally biased toward basic and acidic residues; sequence DVESAKEKCEGGQKEIE. The disordered stretch occupies residues 152–203; the sequence is SSAETQPAQEEHREDPDFETKEGGGLEECSKIEVKEESPESKAERELKASQK. The segment covering 160–200 has biased composition (basic and acidic residues); sequence QEEHREDPDFETKEGGGLEECSKIEVKEESPESKAERELKA. Positions 211–492 constitute an FERM domain; it reads MHCKVSLLDD…EHHTFFRLTS (282 aa). Tyr223 is subject to Phosphotyrosine. The residue at position 379 (Thr379) is a Phosphothreonine. A disordered region spans residues 518–613; it reads TRQASALIDR…DQAEPEPTEV (96 aa). A phosphoserine mark is found at Ser522, Ser541, Ser543, and Ser555. The span at 587–601 shows a compositional bias: basic and acidic residues; sequence AQKETVKDEEKKEEG. Positions 615 to 659 are spectrin--actin-binding; the sequence is KDLDKSQEEIKKHHASISELKKNFMESVPEPRPSEWDKRLSTHSP. Ser620, Ser630, Ser655, and Ser658 each carry phosphoserine. A C-terminal (CTD) region spans residues 660 to 810; the sequence is FRTLNINGQL…VHQETEISEE (151 aa). Residues Thr682 and Thr805 each carry the phosphothreonine modification.

As to quaternary structure, binds with a high affinity to glycophorin and with lower affinity to band III protein. Associates with the nuclear mitotic apparatus. Binds calmodulin, CPAP and DLG1. Also found to associate with contractile apparatus and tight junctions. Interacts with NUMA1; this interaction is negatively regulated by CDK1 during metaphase and promotes for anaphase-specific localization of NUMA1 in symmetrically dividing cells. Interacts with ATP2B1; regulates small intestinal calcium absorption through regulation of membrane expression of ATP2B1. In terms of processing, O-glycosylated; contains N-acetylglucosamine side chains in the C-terminal domain. Phosphorylated at multiple sites by different protein kinases and each phosphorylation event selectively modulates the protein's functions.

The protein resides in the nucleus. It localises to the cytoplasm. It is found in the cytoskeleton. The protein localises to the cell cortex. Protein 4.1 is a major structural element of the erythrocyte membrane skeleton. It plays a key role in regulating membrane physical properties of mechanical stability and deformability by stabilizing spectrin-actin interaction. Recruits DLG1 to membranes. Required for dynein-dynactin complex and NUMA1 recruitment at the mitotic cell cortex during anaphase. This chain is Protein 4.1, found in Canis lupus familiaris (Dog).